A 386-amino-acid chain; its full sequence is Hemagglutinin-esterase (386 aa).

The first 11 residues, 1–11 (MLIIFLFFYFC), serve as a signal peptide directing secretion. The segment at 1–121 (MLIIFLFFYF…SNDVWLLNKV (121 aa)) is esterase domain 1. At 12 to 359 (YGFNEPLNVV…PICVYDFLPI (348 aa)) the chain is on the virion surface side. S34 acts as the Nucleophile in catalysis. Cysteines 38 and 59 form a disulfide. N-linked (GlcNAc...) asparagine; by host glycosylation is found at N83, N110, N145, and N168. C107 and C154 form a disulfide bridge. The interval 122 to 236 (RFYRALYSNM…GSYKVSTTAP (115 aa)) is receptor binding. 3 cysteine pairs are disulfide-bonded: C180/C246, C188/C219, and C277/C282. Residues 237–349 (FLSLPTKALC…RCPTSSIIKH (113 aa)) form an esterase domain 2 region. N-linked (GlcNAc...) asparagine; by host glycosylation occurs at N286. Catalysis depends on charge relay system residues D296 and H299. Cysteines 317 and 341 form a disulfide. N-linked (GlcNAc...) asparagine; by host glycosylation occurs at N328. The chain crosses the membrane as a helical span at residues 360-380 (ILQGILLCLALLFVVFLLFLL). The Intravirion portion of the chain corresponds to 381 to 386 (YNDKSH).

Belongs to the influenza type C/coronaviruses hemagglutinin-esterase family. Homodimer; disulfide-linked. Forms a complex with the M protein in the pre-Golgi. Associates then with S-M complex to form a ternary complex S-M-HE. Post-translationally, N-glycosylated in the host RER.

It is found in the virion membrane. The protein localises to the host cell membrane. The enzyme catalyses N-acetyl-9-O-acetylneuraminate + H2O = N-acetylneuraminate + acetate + H(+). The catalysed reaction is N-acetyl-4-O-acetylneuraminate + H2O = N-acetylneuraminate + acetate + H(+). In terms of biological role, structural protein that makes short spikes at the surface of the virus. Contains receptor binding and receptor-destroying activities. Mediates de-O-acetylation of N-acetyl-4-O-acetylneuraminic acid, which is probably the receptor determinant recognized by the virus on the surface of erythrocytes and susceptible cells. This receptor-destroying activity is important for virus release as it probably helps preventing self-aggregation and ensures the efficient spread of the progeny virus from cell to cell. May serve as a secondary viral attachment protein for initiating infection, the spike protein being the major one. May become a target for both the humoral and the cellular branches of the immune system. The protein is Hemagglutinin-esterase of Homo sapiens (Human).